The sequence spans 171 residues: Small ribosomal subunit protein uS5 (171 aa).

The region spanning Leu12–Val75 is the S5 DRBM domain.

The protein belongs to the universal ribosomal protein uS5 family. As to quaternary structure, part of the 30S ribosomal subunit. Contacts proteins S4 and S8.

In terms of biological role, with S4 and S12 plays an important role in translational accuracy. Functionally, located at the back of the 30S subunit body where it stabilizes the conformation of the head with respect to the body. The polypeptide is Small ribosomal subunit protein uS5 (Buchnera aphidicola subsp. Baizongia pistaciae (strain Bp)).